Reading from the N-terminus, the 110-residue chain is Nucleoid-associated protein CbuK_1603 (110 aa).

The protein belongs to the YbaB/EbfC family. In terms of assembly, homodimer.

It is found in the cytoplasm. The protein localises to the nucleoid. Binds to DNA and alters its conformation. May be involved in regulation of gene expression, nucleoid organization and DNA protection. This chain is Nucleoid-associated protein CbuK_1603, found in Coxiella burnetii (strain CbuK_Q154) (Coxiella burnetii (strain Q154)).